The sequence spans 496 residues: Glutamate--tRNA ligase (496 aa).

A 'HIGH' region motif is present at residues 12–22; sequence PSPTGHLHIGN. Positions 259-263 match the 'KMSKS' region motif; that stretch reads KLSKR. Residue Lys-262 participates in ATP binding.

The protein belongs to the class-I aminoacyl-tRNA synthetase family. Glutamate--tRNA ligase type 1 subfamily. In terms of assembly, monomer.

It localises to the cytoplasm. The enzyme catalyses tRNA(Glu) + L-glutamate + ATP = L-glutamyl-tRNA(Glu) + AMP + diphosphate. Its function is as follows. Catalyzes the attachment of glutamate to tRNA(Glu) in a two-step reaction: glutamate is first activated by ATP to form Glu-AMP and then transferred to the acceptor end of tRNA(Glu). In Lactiplantibacillus plantarum (strain ATCC BAA-793 / NCIMB 8826 / WCFS1) (Lactobacillus plantarum), this protein is Glutamate--tRNA ligase.